The sequence spans 117 residues: Venom protein TxLP11 (117 aa).

The first 22 residues, 1–22 (MNTKTLIVVFLVCLLVSEVVLA), serve as a signal peptide directing secretion.

Post-translationally, contains 4 disulfide bonds. Expressed by the venom gland.

The protein resides in the secreted. The sequence is that of Venom protein TxLP11 from Lychas mucronatus (Chinese swimming scorpion).